We begin with the raw amino-acid sequence, 161 residues long: Putative acetyltransferase SAV0762 (161 aa).

It belongs to the transferase hexapeptide repeat family.

In Staphylococcus aureus (strain Mu50 / ATCC 700699), this protein is Putative acetyltransferase SAV0762.